Consider the following 494-residue polypeptide: Glycosyl hydrolase family 109 protein (494 aa).

Disordered stretches follow at residues 1-35 (MNDA…LRTT) and 59-86 (EAAQ…MAGV). Positions 1–55 (MNDAAPQNPGQDEAKGTGEKDNGGSMSPRSALRTTAGVAGAGLGLSALGTGTASA) form a signal peptide, tat-type signal. Over residues 12–22 (DEAKGTGEKDN) the composition is skewed to basic and acidic residues. NAD(+) contacts are provided by residues 103-104 (NR), aspartate 125, 174-177 (WDFH), 194-195 (EC), and asparagine 223. Substrate-binding positions include tyrosine 252, arginine 271, 283-286 (YPNH), and tyrosine 365. Residue tyrosine 283 participates in NAD(+) binding. Positions 463-494 (KANGKPQQIPDFTRGEWKKSRPGTDSEKPSEP) are disordered. Basic and acidic residues predominate over residues 475-494 (TRGEWKKSRPGTDSEKPSEP).

It belongs to the Gfo/Idh/MocA family. Glycosyl hydrolase 109 subfamily. NAD(+) is required as a cofactor. Predicted to be exported by the Tat system. The position of the signal peptide cleavage has not been experimentally proven.

Glycosidase. The polypeptide is Glycosyl hydrolase family 109 protein (Streptomyces niveus (Streptomyces spheroides)).